Here is a 151-residue protein sequence, read N- to C-terminus: UPF0756 membrane protein Hore_21770 (151 aa).

5 helical membrane-spanning segments follow: residues 7–29 (LLIITILGFLARSRVLVIAGLLL), 49–69 (IEIGLIFLLMAILSSLVLSPV), 84–104 (TVAIIAGVLATKFNGMGLDLL), 110–130 (FILGIIMGSLVGIVFFGGIPV), and 131–151 (GPLMAAGIGAVLFKIIEIIKG).

Belongs to the UPF0756 family.

It is found in the cell membrane. In Halothermothrix orenii (strain H 168 / OCM 544 / DSM 9562), this protein is UPF0756 membrane protein Hore_21770.